A 246-amino-acid polypeptide reads, in one-letter code: Endonuclease NucS (246 aa).

The protein belongs to the NucS endonuclease family.

The protein localises to the cytoplasm. Cleaves both 3' and 5' ssDNA extremities of branched DNA structures. The polypeptide is Endonuclease NucS (Corynebacterium urealyticum (strain ATCC 43042 / DSM 7109)).